The following is a 250-amino-acid chain: 2,3-bisphosphoglycerate-dependent phosphoglycerate mutase (250 aa).

Substrate is bound by residues 8 to 15 (RHGESEWN), 21 to 22 (TG), Arg60, 87 to 90 (ERHY), Lys98, 114 to 115 (RR), and 183 to 184 (GN). His9 serves as the catalytic Tele-phosphohistidine intermediate. Glu87 acts as the Proton donor/acceptor in catalysis.

This sequence belongs to the phosphoglycerate mutase family. BPG-dependent PGAM subfamily.

It catalyses the reaction (2R)-2-phosphoglycerate = (2R)-3-phosphoglycerate. Its pathway is carbohydrate degradation; glycolysis; pyruvate from D-glyceraldehyde 3-phosphate: step 3/5. Its function is as follows. Catalyzes the interconversion of 2-phosphoglycerate and 3-phosphoglycerate. The polypeptide is 2,3-bisphosphoglycerate-dependent phosphoglycerate mutase (Borrelia duttonii (strain Ly)).